The chain runs to 50 residues: Apoptotic protease-activating factor 1 (50 aa).

One can recognise a CARD domain in the interval I1–G31. Residues G46–S50 form the NB-ARC domain.

In terms of assembly, monomer. Oligomerizes to a heptameric ring, known as the apoptosome, upon binding of cytochrome c and dATP. Oligomeric Apaf-1 and pro-caspase-9 bind to each other via their respective NH2-terminal CARD domains and consecutively mature caspase-9 is released from the complex. Interacts with APIP. Interacts (via CARD and NACHT domains) with NAIP/BIRC1 (via NACHT domain). Interacts with CIAO2A.

Oligomeric Apaf-1 mediates the cytochrome c-dependent autocatalytic activation of pro-caspase 9 (Apaf-3), leading to the activation of caspase-3 and apoptosis. This activation requires ATP. The chain is Apoptotic protease-activating factor 1 (APAF1) from Canis lupus familiaris (Dog).